We begin with the raw amino-acid sequence, 506 residues long: Maturase K (506 aa).

Belongs to the intron maturase 2 family. MatK subfamily.

Its subcellular location is the plastid. It localises to the chloroplast. Usually encoded in the trnK tRNA gene intron. Probably assists in splicing its own and other chloroplast group II introns. The sequence is that of Maturase K from Trifolium microcephalum (Small-head clover).